The chain runs to 451 residues: Tubulin alpha-1/alpha-2 chain (451 aa).

Gln11 serves as a coordination point for GTP. At Lys40 the chain carries N6-acetyllysine. Positions 71, 144, 145, 179, 206, and 228 each coordinate GTP. Residue Glu71 coordinates Mg(2+). The active site involves Glu254.

Belongs to the tubulin family. As to quaternary structure, dimer of alpha and beta chains. A typical microtubule is a hollow water-filled tube with an outer diameter of 25 nm and an inner diameter of 15 nM. Alpha-beta heterodimers associate head-to-tail to form protofilaments running lengthwise along the microtubule wall with the beta-tubulin subunit facing the microtubule plus end conferring a structural polarity. Microtubules usually have 13 protofilaments but different protofilament numbers can be found in some organisms and specialized cells. Mg(2+) serves as cofactor. In terms of processing, undergoes a tyrosination/detyrosination cycle, the cyclic removal and re-addition of a C-terminal tyrosine residue by the enzymes tubulin tyrosine carboxypeptidase (TTCP) and tubulin tyrosine ligase (TTL), respectively. Post-translationally, acetylation of alpha chains at Lys-40 stabilizes microtubules and affects affinity and processivity of microtubule motors. This modification has a role in multiple cellular functions, ranging from cell motility, cell cycle progression or cell differentiation to intracellular trafficking and signaling.

The protein resides in the cytoplasm. It is found in the cytoskeleton. It catalyses the reaction GTP + H2O = GDP + phosphate + H(+). Its function is as follows. Tubulin is the major constituent of microtubules, a cylinder consisting of laterally associated linear protofilaments composed of alpha- and beta-tubulin heterodimers. Microtubules grow by the addition of GTP-tubulin dimers to the microtubule end, where a stabilizing cap forms. Below the cap, tubulin dimers are in GDP-bound state, owing to GTPase activity of alpha-tubulin. This Volvox carteri (Green alga) protein is Tubulin alpha-1/alpha-2 chain (TUBA1).